The chain runs to 176 residues: Probable non-specific lipid-transfer protein 1 (176 aa).

The first 37 residues, 1 to 37 (MRTVSAPSAVALVVIVAAGLAWTSLASVAPPAPAPGS), serve as a signal peptide directing secretion. Disulfide bonds link Cys41–Cys89, Cys51–Cys66, Cys67–Cys112, and Cys87–Cys128. Positions 139-176 (QLPVSLRHGPVTGPSDPAHKARLERPQIRVPPPAPEKA) are disordered. Residues 155 to 165 (PAHKARLERPQ) are compositionally biased toward basic and acidic residues. Positions 167–176 (RVPPPAPEKA) are enriched in pro residues.

It belongs to the plant LTP family.

Its function is as follows. Plant non-specific lipid-transfer proteins transfer phospholipids as well as galactolipids across membranes. May play a role in wax or cutin deposition in the cell walls of expanding epidermal cells and certain secretory tissues. The protein is Probable non-specific lipid-transfer protein 1 of Parietaria judaica (Pellitory-of-the-wall).